The chain runs to 280 residues: Ribulose-phosphate 3-epimerase, chloroplastic (280 aa).

Residues 1–45 (SLGSSTLLQSQISGFGGSQKLQKISFSNPNSLTFTRRRIQTVVNA) constitute a chloroplast transit peptide. Ser-62 provides a ligand contact to substrate. A divalent metal cation-binding residues include His-87, Asp-89, and His-120. Asp-89 functions as the Proton acceptor in the catalytic mechanism. Residues His-120, 198–201 (GFGG), 231–233 (DGG), and 253–254 (GS) contribute to the substrate site. Residue Asp-231 coordinates a divalent metal cation. Catalysis depends on Asp-231, which acts as the Proton donor.

This sequence belongs to the ribulose-phosphate 3-epimerase family. As to quaternary structure, homohexamer. Co(2+) serves as cofactor. Requires Fe(2+) as cofactor. The cofactor is Mn(2+). Zn(2+) is required as a cofactor. Highest level of expression in leaves, whereas it is low in roots, tubers, and stems.

Its subcellular location is the plastid. The protein localises to the chloroplast thylakoid membrane. The enzyme catalyses D-ribulose 5-phosphate = D-xylulose 5-phosphate. The protein operates within carbohydrate biosynthesis; Calvin cycle. Catalyzes the reversible epimerization of D-ribulose 5-phosphate to D-xylulose 5-phosphate. The protein is Ribulose-phosphate 3-epimerase, chloroplastic of Solanum tuberosum (Potato).